The chain runs to 168 residues: Endoribonuclease YbeY (168 aa).

Residues H126, H130, and H136 each contribute to the Zn(2+) site.

It belongs to the endoribonuclease YbeY family. Zn(2+) serves as cofactor.

The protein resides in the cytoplasm. Functionally, single strand-specific metallo-endoribonuclease involved in late-stage 70S ribosome quality control and in maturation of the 3' terminus of the 16S rRNA. This Agrobacterium fabrum (strain C58 / ATCC 33970) (Agrobacterium tumefaciens (strain C58)) protein is Endoribonuclease YbeY.